The primary structure comprises 320 residues: Probable L-ascorbate peroxidase 5, chloroplastic (320 aa).

The transit peptide at 1–42 (MAVVHRILRRGLSAASPLPSLRGLLLVSPQELGRRPASSSSS) directs the protein to the chloroplast. Residue His-80 is the Proton acceptor of the active site. Heme b is bound at residue His-209. A K(+)-binding site is contributed by Thr-210. Residues 213–241 (RARPERSGWGKPETKYTENGPGAPGGQSW) form a disordered region. Residues 214–228 (ARPERSGWGKPETKY) are compositionally biased toward basic and acidic residues. The K(+) site is built by Thr-242 and Asp-249.

It belongs to the peroxidase family. Ascorbate peroxidase subfamily. Requires heme b as cofactor. In terms of tissue distribution, expressed in leaves, stems and flowers.

It localises to the plastid. Its subcellular location is the chloroplast stroma. The enzyme catalyses L-ascorbate + H2O2 = L-dehydroascorbate + 2 H2O. Functionally, plays a key role in hydrogen peroxide removal. The chain is Probable L-ascorbate peroxidase 5, chloroplastic from Oryza sativa subsp. japonica (Rice).